Here is a 212-residue protein sequence, read N- to C-terminus: Ubiquitin-like protein MDY2 (212 aa).

A Ubiquitin-like domain is found at Val-74–Pro-152. The interval Pro-150–Val-177 is disordered.

As to quaternary structure, interacts with GET4.

It localises to the cytoplasm. It is found in the cytosol. The protein resides in the nucleus. Required for efficient mating. Involved in the production of alpha-factor, the KAR9 and TUB1 location to the shmoo tip and nuclear migration into pheromone-induced shmoos. This chain is Ubiquitin-like protein MDY2 (MDY2), found in Saccharomyces cerevisiae (strain ATCC 204508 / S288c) (Baker's yeast).